Here is a 438-residue protein sequence, read N- to C-terminus: Adenylosuccinate synthetase (438 aa).

GTP-binding positions include 13–19 (GDEGKGK) and 41–43 (GHT). The Proton acceptor role is filled by Asp14. The Mg(2+) site is built by Asp14 and Gly41. IMP is bound by residues 14 to 17 (DEGK), 39 to 42 (NAGH), Thr130, Arg144, Gln225, Thr240, and Arg310. His42 serves as the catalytic Proton donor. Residue 306–312 (ATTGRLR) participates in substrate binding. GTP is bound by residues Arg312, 338–340 (KLD), and 421–423 (STG).

The protein belongs to the adenylosuccinate synthetase family. Homodimer. Mg(2+) serves as cofactor.

Its subcellular location is the cytoplasm. The enzyme catalyses IMP + L-aspartate + GTP = N(6)-(1,2-dicarboxyethyl)-AMP + GDP + phosphate + 2 H(+). Its pathway is purine metabolism; AMP biosynthesis via de novo pathway; AMP from IMP: step 1/2. Functionally, plays an important role in the de novo pathway of purine nucleotide biosynthesis. Catalyzes the first committed step in the biosynthesis of AMP from IMP. The protein is Adenylosuccinate synthetase of Vibrio parahaemolyticus serotype O3:K6 (strain RIMD 2210633).